The sequence spans 312 residues: D-apiose import binding protein (312 aa).

The N-terminal stretch at 1 to 26 is a signal peptide; sequence MKASKRWVALAAATLTLFTATGTAQA. D-apiofuranose is bound by residues Asn39, 115-116, 162-164, Arg168, Asn218, Asp243, and Gln263; these read DR and DIN.

This sequence belongs to the bacterial solute-binding protein 2 family.

The protein resides in the periplasm. Its function is as follows. Part of an ABC transporter complex involved in D-apiose import. Binds D-apiose, D-ribose and D-ribulose. The protein is D-apiose import binding protein of Paraburkholderia graminis (strain ATCC 700544 / DSM 17151 / LMG 18924 / NCIMB 13744 / C4D1M).